We begin with the raw amino-acid sequence, 257 residues long: 4-hydroxy-tetrahydrodipicolinate reductase (257 aa).

Position 7–12 (Gly-7–Met-12) interacts with NAD(+). Arg-34 is a binding site for NADP(+). NAD(+) is bound by residues Gly-96 to Thr-98 and Ser-117 to Met-120. Residue His-149 is the Proton donor/acceptor of the active site. His-150 is a (S)-2,3,4,5-tetrahydrodipicolinate binding site. Catalysis depends on Lys-153, which acts as the Proton donor. Residue Gly-159–Thr-160 coordinates (S)-2,3,4,5-tetrahydrodipicolinate.

The protein belongs to the DapB family.

The protein localises to the cytoplasm. It catalyses the reaction (S)-2,3,4,5-tetrahydrodipicolinate + NAD(+) + H2O = (2S,4S)-4-hydroxy-2,3,4,5-tetrahydrodipicolinate + NADH + H(+). The catalysed reaction is (S)-2,3,4,5-tetrahydrodipicolinate + NADP(+) + H2O = (2S,4S)-4-hydroxy-2,3,4,5-tetrahydrodipicolinate + NADPH + H(+). It functions in the pathway amino-acid biosynthesis; L-lysine biosynthesis via DAP pathway; (S)-tetrahydrodipicolinate from L-aspartate: step 4/4. Functionally, catalyzes the conversion of 4-hydroxy-tetrahydrodipicolinate (HTPA) to tetrahydrodipicolinate. This is 4-hydroxy-tetrahydrodipicolinate reductase from Anaplasma marginale (strain St. Maries).